The sequence spans 542 residues: Protein XP55 (542 aa).

An N-terminal signal peptide occupies residues 1–33 (MTARRTRWTRRTDRSLPIRSAAAAVAFAAGATA). C34 carries N-palmitoyl cysteine lipidation. Residue C34 is the site of S-diacylglycerol cysteine attachment. Residues 519–542 (LEGRTNTASPAGPGGTSRTGGRKK) form a disordered region.

Belongs to the bacterial solute-binding protein 5 family.

It localises to the cell membrane. Required for transport of an unidentified substrate. The chain is Protein XP55 (xp55) from Streptomyces lividans.